The following is a 48-amino-acid chain: Cytochrome b559 subunit beta (48 aa).

The chain crosses the membrane as a helical span at residues 23–39; sequence WLAVHALAIPSVFFLGA. Histidine 27 contacts heme.

Belongs to the PsbE/PsbF family. In terms of assembly, heterodimer of an alpha subunit and a beta subunit. PSII is composed of 1 copy each of membrane proteins PsbA, PsbB, PsbC, PsbD, PsbE, PsbF, PsbH, PsbI, PsbJ, PsbK, PsbL, PsbM, PsbT, PsbX, PsbY, Psb30/Ycf12, peripheral proteins PsbO, CyanoQ (PsbQ), PsbU, PsbV and a large number of cofactors. It forms dimeric complexes. The cofactor is heme b.

It localises to the cellular thylakoid membrane. In terms of biological role, this b-type cytochrome is tightly associated with the reaction center of photosystem II (PSII). PSII is a light-driven water:plastoquinone oxidoreductase that uses light energy to abstract electrons from H(2)O, generating O(2) and a proton gradient subsequently used for ATP formation. It consists of a core antenna complex that captures photons, and an electron transfer chain that converts photonic excitation into a charge separation. The protein is Cytochrome b559 subunit beta of Prochlorococcus marinus (strain MIT 9515).